Here is a 493-residue protein sequence, read N- to C-terminus: GPI alpha-1,6-mannosyltransferase 2 (493 aa).

The Cytoplasmic portion of the chain corresponds to 1–13 (MWPQDPSRKEVLR). The helical transmembrane segment at 14–34 (FAVSCRILTLMLQALFNAIIP) threads the bilayer. The Lumenal segment spans residues 35–77 (DHHAEAFSPPRLAPSGFVDQLVEGLLGGLSHWDAEHFLFIAEH). Residues 78–98 (GYLYEHNFAFFPGFPLALLVG) traverse the membrane as a helical segment. At 99 to 113 (TELLRPLRGLLSLRS) the chain is on the cytoplasmic side. Residues 114 to 134 (CLLISVASLNFLFFMLAAVAL) form a helical membrane-spanning segment. Over 135–136 (HD) the chain is Lumenal. A helical transmembrane segment spans residues 137–157 (LGCLVLHCPHQSFYAALLFCL). Over 158 to 161 (SPAN) the chain is Cytoplasmic. Residues 162-182 (VFLAAGYSEALFALLTFSAMG) form a helical membrane-spanning segment. The Lumenal segment spans residues 183-192 (QLERGRVWTS). Residues 193-213 (VLLFAFATGVRSNGLVSVGFL) form a helical membrane-spanning segment. Residues 214–234 (MHSQCQGFFSSLTMLNPLRQL) lie on the Cytoplasmic side of the membrane. A helical membrane pass occupies residues 235–255 (FKLMASLFLSVFTLGLPFALF). Over 256–327 (QYYAYTQFCL…KYYELKQVPN (72 aa)) the chain is Lumenal. Residues 328–348 (FLLAAPVAILVAWATWTYVTT) form a helical membrane-spanning segment. Over 349–378 (HPWLCLTLGLQRSKNNKTLEKPDLGFLSPQ) the chain is Cytoplasmic. Residues 379–399 (VFVYVVHAAVLLLFGGLCMHV) form a helical membrane-spanning segment. Over 400 to 469 (QVLTRFLGSS…HWKTCSPVTR (70 aa)) the chain is Lumenal. Residues 470–490 (YILGYFLTYWLLGLLLHCNFL) form a helical membrane-spanning segment. Over 491–493 (PWT) the chain is Cytoplasmic.

The protein belongs to the PIGV family. Not N-glycosylated.

It is found in the endoplasmic reticulum membrane. It functions in the pathway glycolipid biosynthesis; glycosylphosphatidylinositol-anchor biosynthesis. Alpha-1,6-mannosyltransferase that catalyzes the transfer of the second mannose, via an alpha-1,6 bond, from a dolichol-phosphate-mannose (Dol-P-Man) to the alpha-D-Man-(1-&gt;4)-alpha-D-GlcN-(1-&gt;6)-(1-radyl,2-acyl-sn-glycero-3-phospho)-2-acyl-inositol (also termed H2) intermediate to generate an alpha-D-Man-(1-&gt;6)-alpha-D-Man-(1-&gt;4)-alpha-D-GlcN-(1-&gt;6)-(1-radyl,2-acyl-sn-glycero-3-phospho)-2-acyl-inositol (also termed H3) and participates in the seventh step of the glycosylphosphatidylinositol-anchor biosynthesis. Also transfers the second mannose on a 2-PEtn-alpha-D-Man-(1-&gt;4)-alpha-D-GlcN-(1-&gt;6)-(1-radyl,2-acyl-sn-glycero-3-phospho)-2-acyl-inositol (also termed H5). In Homo sapiens (Human), this protein is GPI alpha-1,6-mannosyltransferase 2.